Here is a 263-residue protein sequence, read N- to C-terminus: 7beta-hydroxysteroid dehydrogenase (263 aa).

NADP(+) contacts are provided by residues 17–21 (TEGVG), 40–41 (RR), and 66–67 (DF). The Proton acceptor role is filled by Y156. NADP(+) is bound at residue S240.

The protein belongs to the short-chain dehydrogenases/reductases (SDR) family. Homodimer.

It catalyses the reaction a 7beta-hydroxysteroid + NADP(+) = a 7-oxosteroid + NADPH + H(+). It carries out the reaction 7-oxolithocholate + NADPH + H(+) = ursodeoxycholate + NADP(+). The enzyme catalyses 7beta-hydroxy-3,12-dioxo-5beta-cholan-24-oate + NADP(+) = dehydrocholate + NADPH + H(+). The catalysed reaction is ursocholate + NADP(+) = 3alpha,12alpha-dihydroxy-7-oxo-5beta-cholanate + NADPH + H(+). Functionally, 7beta-hydroxysteroid dehydrogenase that catalyzes the reduction of the 7-oxo group of 7-oxo-lithocholate (7-oxo-LCA), to yield ursodeoxycholate (UDCA). As C.aerofaciens is an intestinal bacterium, this enzyme probably contributes to the formation of UDCA in the human colon. UDCA is regarded as a chemopreventive beneficial secondary bile acid due to its low hydrophobicity; it protects hepatocytes and bile duct epithelial cells against necrosis and apoptosis induced by more hydrophobic secondary bile acids like deoxycholate (DCA). This enzyme is also able to catalyze the reverse reaction, i.e. the oxidation of the 7beta-hydroxy group of UDCA to 7-oxo-LCA. To a lesser extent, is also active on the taurine- and glycine-conjugates of ursodeoxycholate. It is specific for NADPH/NADP(+) as the electron acceptor/donor since it is not active with NADH/NAD(+). In the presence of NADPH, 7beta-HSDH can also reduce dehydrocholate. And is also able to oxidize ursocholate. The sequence is that of 7beta-hydroxysteroid dehydrogenase from Collinsella aerofaciens (strain ATCC 25986 / DSM 3979 / JCM 10188 / KCTC 3647 / NCTC 11838 / VPI 1003).